The primary structure comprises 105 residues: ESAT-6-like protein EsxB (105 aa).

The segment at 1–23 is disordered; it reads MSQGFKTEADVMRNTAHRVDDTN. Residues 7–21 are compositionally biased toward basic and acidic residues; that stretch reads TEADVMRNTAHRVDD.

Belongs to the WXG100 family. CFP-10 subfamily. As to quaternary structure, forms a tight 1:1 complex with EsxB.

This is ESAT-6-like protein EsxB from Corynebacterium diphtheriae (strain ATCC 700971 / NCTC 13129 / Biotype gravis).